The primary structure comprises 214 residues: Ribonuclease HII (214 aa).

Residues 26 to 214 (EIVCGVDEAG…PVRAALDLIR (189 aa)) form the RNase H type-2 domain. Residues Asp-32, Glu-33, and Asp-124 each contribute to the a divalent metal cation site.

This sequence belongs to the RNase HII family. It depends on Mn(2+) as a cofactor. Requires Mg(2+) as cofactor.

It is found in the cytoplasm. It carries out the reaction Endonucleolytic cleavage to 5'-phosphomonoester.. Endonuclease that specifically degrades the RNA of RNA-DNA hybrids. This is Ribonuclease HII from Burkholderia cenocepacia (strain HI2424).